We begin with the raw amino-acid sequence, 726 residues long: MAR-binding filament-like protein 1 (726 aa).

The N-terminal 41 residues, 1–41 (MGFLIGGSCFVPSVPLHSRFLSSPSSSSSSSPSSSQFGLLC), are a transit peptide targeting the chloroplast. Residues 42–95 (SSNVAKFKRRRPTLASLNQEDGYEYDVASAKRRAFLLVGISVLPFLQLRSPALA) constitute a thylakoid transit peptide. Residues 96–124 (DERGNEIKTSKVDLETEVAVVSEGTSPNP) are Lumenal, thylakoid-facing. A helical transmembrane segment spans residues 125–145 (FLALLNGLGIFSAGVLGALYA). Positions 144-691 (YALARQDTKA…KGEILRMRSQ (548 aa)) form a coiled coil. Topologically, residues 146–726 (LARQDTKAAE…VRRRKSSTSS (581 aa)) are stromal. Residues 678 to 726 (LGSAKGEILRMRSQPDSVKAVNSTDNKEKSDNTVTVKKVVRRRKSSTSS) form a disordered region. Over residues 691-701 (QPDSVKAVNST) the composition is skewed to polar residues. The short motif at 715–722 (KVVRRRKS) is the Nuclear localization signal element. The segment covering 715–726 (KVVRRRKSSTSS) has biased composition (basic residues).

As to quaternary structure, interacts with PTST2; the interaction is essential for the initiation of starch granules biosynthesis in leaf chloroplasts, for the correct location of the process in the stromal spaces between the thylakoid membranes, and for the association of PTST2 with the thylakoid membranes. Post-translationally, predicted to be translocated into the thylakoid by the Tat system. The position of the transit peptide cleavages have not been experimentally proven.

Its subcellular location is the plastid. It localises to the chloroplast. The protein resides in the chloroplast thylakoid membrane. It is found in the chloroplast stroma. The protein localises to the chloroplast nucleoid. Its subcellular location is the nucleus. It localises to the nucleus matrix. Its function is as follows. DNA-binding protein required for the initiation of starch granules biosynthesis in leaf chloroplasts. Anchored to the thylakoid membranes with its C-terminus facing into the stroma where it is essential for localizing PTST2 and SS4 to the stromal spaces between the thylakoid membranes in order to begin starch granule formation. Associated with leaf chloroplastic nucleoids in vivo. Binds to various chloroplastic double-stranded DNA fragments without particular sequence specificity in vitro. May function at the interface between nucleoids and thylakoids possibly by anchoring nucleoids to the thylakoid membrane system in mature chloroplasts. Likely to participate in nuclear architecture by connecting chromatin with the nuclear matrix and potentially with the nuclear envelope. The chain is MAR-binding filament-like protein 1 from Arabidopsis thaliana (Mouse-ear cress).